Reading from the N-terminus, the 145-residue chain is MTKKYLKVDVVSPLGSVFKGEADIVSLRGSAGEMGIAYGHTELLSTLPAGVVNVRKDEHTDVLYVSGGIVEVTPTRVTIMVDDMERAENLNQAEAEKARARAQEALKNPDASKLDIEAASKRLSEADARLKALNSSKGLYYSKED.

Residues 93-104 are compositionally biased toward basic and acidic residues; sequence AEAEKARARAQE. Residues 93–113 form a disordered region; sequence AEAEKARARAQEALKNPDASK.

Belongs to the ATPase epsilon chain family. As to quaternary structure, F-type ATPases have 2 components, CF(1) - the catalytic core - and CF(0) - the membrane proton channel. CF(1) has five subunits: alpha(3), beta(3), gamma(1), delta(1), epsilon(1). CF(0) has three main subunits: a, b and c.

It is found in the cell inner membrane. Produces ATP from ADP in the presence of a proton gradient across the membrane. This Francisella philomiragia subsp. philomiragia (strain ATCC 25017 / CCUG 19701 / FSC 153 / O#319-036) protein is ATP synthase epsilon chain.